Consider the following 118-residue polypeptide: MARIAGINIPDQKHTVIALTAIYGIGRTRAQAICAATSIAEDAKIKELSEAQIDTLREEVANYIVEGDLRREVSMNIKRLMDLGCYRGLRHRRSLPLRGQRTKTNARTRKGPRKPIRK.

Positions 94–118 (SLPLRGQRTKTNARTRKGPRKPIRK) are disordered.

Belongs to the universal ribosomal protein uS13 family. As to quaternary structure, part of the 30S ribosomal subunit. Forms a loose heterodimer with protein S19. Forms two bridges to the 50S subunit in the 70S ribosome.

Its function is as follows. Located at the top of the head of the 30S subunit, it contacts several helices of the 16S rRNA. In the 70S ribosome it contacts the 23S rRNA (bridge B1a) and protein L5 of the 50S subunit (bridge B1b), connecting the 2 subunits; these bridges are implicated in subunit movement. Contacts the tRNAs in the A and P-sites. The sequence is that of Small ribosomal subunit protein uS13 from Shewanella halifaxensis (strain HAW-EB4).